A 130-amino-acid chain; its full sequence is Odontogenesis associated phosphoprotein (130 aa).

The signal sequence occupies residues 1–23 (MARRHCFSYWLLVCWLVVTVAEG).

As to expression, highly expressed in placenta.

It localises to the secreted. In terms of biological role, may promote nucleation of hydroxyapatite. The sequence is that of Odontogenesis associated phosphoprotein from Homo sapiens (Human).